The chain runs to 160 residues: Large ribosomal subunit protein uL16 (160 aa).

Residues 138 to 160 are disordered; it reads INLSSDSSGEGKTGKDSKEEVKK. The span at 149–160 shows a compositional bias: basic and acidic residues; sequence KTGKDSKEEVKK.

The protein belongs to the universal ribosomal protein uL16 family. In terms of assembly, part of the 50S ribosomal subunit.

Functionally, binds 23S rRNA and is also seen to make contacts with the A and possibly P site tRNAs. This Prochlorococcus marinus subsp. pastoris (strain CCMP1986 / NIES-2087 / MED4) protein is Large ribosomal subunit protein uL16.